A 721-amino-acid chain; its full sequence is Polyribonucleotide nucleotidyltransferase (721 aa).

The Mg(2+) site is built by Asp495 and Asp501. Positions Pro562–Ile621 constitute a KH domain. An S1 motif domain is found at Gly631–Lys699. The interval Lys699–Lys721 is disordered.

This sequence belongs to the polyribonucleotide nucleotidyltransferase family. It depends on Mg(2+) as a cofactor.

Its subcellular location is the cytoplasm. It carries out the reaction RNA(n+1) + phosphate = RNA(n) + a ribonucleoside 5'-diphosphate. Involved in mRNA degradation. Catalyzes the phosphorolysis of single-stranded polyribonucleotides processively in the 3'- to 5'-direction. The chain is Polyribonucleotide nucleotidyltransferase from Anaeromyxobacter dehalogenans (strain 2CP-C).